The chain runs to 668 residues: tRNA 5-methylaminomethyl-2-thiouridine biosynthesis bifunctional protein MnmC (668 aa).

The interval M1–E245 is tRNA (mnm(5)s(2)U34)-methyltransferase. The interval I270–G668 is FAD-dependent cmnm(5)s(2)U34 oxidoreductase.

The protein in the N-terminal section; belongs to the methyltransferase superfamily. tRNA (mnm(5)s(2)U34)-methyltransferase family. It in the C-terminal section; belongs to the DAO family. Requires FAD as cofactor.

The protein localises to the cytoplasm. It catalyses the reaction 5-aminomethyl-2-thiouridine(34) in tRNA + S-adenosyl-L-methionine = 5-methylaminomethyl-2-thiouridine(34) in tRNA + S-adenosyl-L-homocysteine + H(+). Functionally, catalyzes the last two steps in the biosynthesis of 5-methylaminomethyl-2-thiouridine (mnm(5)s(2)U) at the wobble position (U34) in tRNA. Catalyzes the FAD-dependent demodification of cmnm(5)s(2)U34 to nm(5)s(2)U34, followed by the transfer of a methyl group from S-adenosyl-L-methionine to nm(5)s(2)U34, to form mnm(5)s(2)U34. This is tRNA 5-methylaminomethyl-2-thiouridine biosynthesis bifunctional protein MnmC from Shigella boydii serotype 18 (strain CDC 3083-94 / BS512).